The primary structure comprises 427 residues: Phosphoribosylamine--glycine ligase (427 aa).

The ATP-grasp domain occupies K107–D312. I133–S193 serves as a coordination point for ATP. Residues E282 and N284 each coordinate Mg(2+).

Belongs to the GARS family. Requires Mg(2+) as cofactor. Mn(2+) is required as a cofactor.

It carries out the reaction 5-phospho-beta-D-ribosylamine + glycine + ATP = N(1)-(5-phospho-beta-D-ribosyl)glycinamide + ADP + phosphate + H(+). The protein operates within purine metabolism; IMP biosynthesis via de novo pathway; N(1)-(5-phospho-D-ribosyl)glycinamide from 5-phospho-alpha-D-ribose 1-diphosphate: step 2/2. The protein is Phosphoribosylamine--glycine ligase of Brucella melitensis biotype 1 (strain ATCC 23456 / CCUG 17765 / NCTC 10094 / 16M).